Here is a 3326-residue protein sequence, read N- to C-terminus: MAADTLMVTGAWLSNSGTLQGRQSVGLAVGRDFSQTADGVLTSGGTVTVTAGGVATAGALTAQGLALTAGRWRHQGAVTLGGDGRLVLDELDNGGTLRAGGAWDMQAAALSNGGTLQGGRLALTLSGAAVNRGTLAGERVTLTADSLDNGGTLLGMDALTLAIAGTARNQASGQWLSQGESRLTAGTLDNQGQWQGDSLSVTADRIRNAGQLLGLSALTLTADGTLTNTATGTLLTQGAAVLRAATVDNDGEWQAGRLRLTADSLRNGGRIQSDGALDVALSPAGVLTNTGTLAANGDTTLTPGGLDNRGAVSVRGDLTVTGTDLDNAGQLAARGALTLTGSYAGAGSLYSDAALTLRGTTLANDGGRWQGQTVDIGGGPLTNDGNITGLDSLTVTTTGALTNRGRLAGQTLGITADALDNAGTLLGVDALTLAIAGTARNQTSGQWLSNGAGRLTAGTLDNRGQWQGDSLDATADRLDNAGTLLGLSAMTLTVNGALTNTGRLLTQGAAVLSAATADNDGEWQTGSLWLTADSLRNGGQIHSDGEVRITLPTADGDPLRPTLRAARQLAQDVEAIGAGRLSNTGVLTAGGDGRITGRGLDNAGTLAAGGALTLAAGDLTNAGRLESRTLSLTGDSLDNGGTLLAEQGGELTLGGGLHVGADGRLLSNGDWQVQAGTVTSLGQWQGKTLLLSAASLDNGGALLATDAVTLTLTQGYTGGAGSQVLGSGAVTLTADTVTQQGDIGGDRLALTTGTLTNGGRLVGLSQLDVTSRGQLTNRATGSLLGNGTAGVTAATLDNAGSVQADTLTLTADTVTNAGRMQGTSALTLNGVSRYTGTDGSQLLSGGTATLAIDNADNAGLWQAGELRFRGASLTSRGQITGLDSLTVDAASLTSTGQLTTRGLATLRGQRFDNGGTLTALGGFTARFSDSVTNQGGGQLLSGGTGSLTTGTLVNRGRWQSDRLTLTADTLRNPGTLLGLDDGNIQLTGAYVGEAGSQVGGNGALSLSAATIDQAGQWQARDVTLRATRLRNQGSITGSGQLTATLDEQLENLAGATLLGGTVWLGGATVSNGGQIQGRSGLTVQGGTLLDNQGGGQLLSGGQLALGATQLTNAGWVQGQDLTLTTAQLDNSGTLQAQSGLTLHLPQWTNRGTVQAGQLDITTDGALDNRGTLLGLTRLALQAASLNNADGARLYSAGGLQLRTGQLTQDGQLAALGDLRADIGTPFTFTRTLAAGGQLTLAVTGDLVQAGTLQGHGVTVTSTGTLTQQGRIVAGGGNSTLSAAAISQTESGSIQGGGPLSLRATGNIVNRGFVGTAGDLLVQAGGVMENGSLLYGGGNLQLLSAALVNRFGNILAGGSLWIQRDAAGNASDSVLNSSGTIETQRGDITVRTGTLTNQREGLVVTESGSTAADMPDWVGGTTIYIPVERFEVIKDYLVYSFEHTPGAGSDSPTTYNYFYPFPLSHVSKQEFSASSKIVNIESKGGSSLIHSAGDINIFSSVLVNDASIIASEKNILMNGGVLKNSSYQSGVMSESLIYEYERDDKDDFLPYIEWLWEKTKREEGVSDYDYWEYLSGYNIHAYNRNILTNDRFKYVLKDRQIIFTPGQTYAATIQAGGAITANFSQNISNTNLQPGSGGFMPAMATPTLAGVNALGPVGAQADRGLNGGTAGNVSGSTLSGAGNGVALAGQAGRLNAGYSAVTRDNTASSGSALNPVGIPAGPGTAGGAPVAGASLTPVAPGALALSDLQAALAQGLQQLGSPSLTDYPLPTSQSGLFVADTAGDSRYLIRTNPTLSQLGQVDNALFGDLRGLLGQTPGTTAPVERSPTLTDPTQVLGSSYLLGKLNLDAEHDYRFLGDAAFDTRYISNAVLSQTGQRYLNGVGSELAQMQQLMDNAAAEKSRLNLQLGVSLTPEQVAGLSHSLVWWENITVGGQTVLAPKLYLAQADKTNLQGSRIVANSVSLSAGGDIDNRGSTVTAQDALAVASGGNLTNSEGGLLNAGGALNLVALGNLTNSSATIQGNTVTLASVGGDIVNTTTTDQWQTAARDGRGRGSLTRTDIGQAGLISAQGGLTLQAGHDIALNGAQLSAGGPLQLAAGNDIRLTALSTVTDTVRQDGGATTERRGQGLVQSTVASGGDLSLSAGRDLSGTAAQLSAAGTLALSAGRDLSLLSASEEQFSSNAWKRHLDWQQTVTQQGTVLNAGEGLSLRAGQDLTLQGAQAETRGALTAQAGRDLSLLSATESRHDFFEETTVKKGFLSKTTTHTLRETQQTTEKGTLLSAGSVALTAGHDIGVQGSAVAADGEVTLTAGNDITTAASVETYRNYEEQSRKKSGVFSGGGIGFTIGSTSLRQTLESAGTTQSQSVSTLGSTGGSVRLNAGQAVSMAATDVIAARDIQVTGNSVTIDPGYDTRKQSRQMEQKTAGLTVTLSGVVGSALNSAVQTVQAVREQSDSRLQALQGMKAALSGYQAYQGTQIDTNNQGASSFVGISVSLGAQRSSSSQTSEQSQSFASTLNAGHDISVVARQGDITAVGSQLKAANNVELNASRAINLLSARNTESMTGSNSSSGGNIGVSFGLSNSGAGFSVFANVNAAKGRELGNGNSWSETTVDAGQQIALTSGGDTRLTGAQVSGERIVANVGGDLLLKSQQDSNRYDSKQTSVSAGGSFTFGSMTGSGYLSASQDKMHSSFDSVQQQTGLFAGKGGYDISVGNHTQLDGAVIGSTAGADKNRLDTGTLGFSNIDNRAEFSVSHSGIGLSASPSLSMSDMLKSAALTAPSALMSMGRGGNAGSTTYAAVSDGALIIRNQAGQQQDIAGLSREVEHANNALSPIFDKEKEQKRLQTAQMVGELGAQVMDVIRTEGEIRAVRAAEAKGDVKRPPDNASEKDWDKYKKDLTETPAYKAVMQSYGTGSDLQRATQAATAAIQALAGGGNLQQALAGASAPYLAQLVKGVTMPADESKATASDIAANAMGHALMGAVVAQLSGKDAVAGAVGAAGGELTARLLIMKELYSGRDTSDLTEAEKQSVSALASLAAGLASGIASGNTTGAATGAQAGRNAVENNSLGDIAQAQSEGKTLEQNAGEYVEAENERYKKENCAGLSAEACSVKMYEERREELKETLSTGADFVPVIGDIKSFAEAQSALDYLAAAVGLIPGAGDAAGKAIKAAETALKKGELAEASKLINKASDEIQAVKPLDVGSYKELKDRAVVGDGLEHDHIPSFAALRTAKENELGRKLTPAEEKTLYQNATAVEVPKDVHRAGPTYGGKNTAAQVQQDALDLCGAVCRDTDALRTNMIERGYEPALVDDAVKKIIDRNRQIGVIK.

The segment at 36-342 is two-partner system transport domain (TPS); it reads TADGVLTSGG…ARGALTLTGS (307 aa). Residues 343-1396 form an FHA-1 region; sequence YAGAGSLYSD…ITVRTGTLTN (1054 aa). Residues 1397-1765 form a receptor binding domain (RBD) region; sequence QREGLVVTES…QQLGSPSLTD (369 aa). Positions 1766-1951 are YP domain; it reads YPLPTSQSGL…LAQADKTNLQ (186 aa). The periplasmic FHA-1 repeat (pFR) stretch occupies residues 1959-2097; the sequence is SVSLSAGGDI…AGGPLQLAAG (139 aa). The tract at residues 2125-2660 is FHA-2; that stretch reads QGLVQSTVAS…SNRYDSKQTS (536 aa). A VENN CT cleavage motif motif is present at residues 3060–3063; it reads VENN. Positions 3060–3326 are CT domain; the sequence is VENNSLGDIA…DRNRQIGVIK (267 aa).

The protein in the N-terminal section; belongs to the CdiA toxin family. The C-terminal (CT) domain interacts with cognate CdiI but not non-cognate CdiI from E.coli strain 536 / UPEC.

The protein localises to the target cell. The protein resides in the target cell cytoplasm. Its function is as follows. Toxic component of a toxin-immunity protein module, which functions as a cellular contact-dependent growth inhibition (CDI) system. CDI modules allow bacteria to communicate with and inhibit the growth of closely related neighboring bacteria in a contact-dependent fashion. CDI is neutralized by its cognate immunity protein CdiI, but not by non-cognate CdiI from other bacteria. The C-terminal domain (CT) has strong DNase activity; this activity is inhibited by cognate CdiI. The CdiA protein is thought to be exported from the cell through the central lumen of CdiB, the other half of its two-partner system (TPS). The TPS domain probably remains associated with CdiB while the FHA-1 domain forms an extended filament with the receptor-binding domain (RBD) at its extremity; in the secretion arrested state the C-terminus of the RBD and YP domains form a hairpin-like structure as the FHA-2, PT and CT domains are periplasmic. The YP domain is probably responsible for this arrest at the point where it re-enters the host cell periplasm. Upon binding to a target cell outer membrane receptor a signal is transmitted to activate secretion. The filament elongates slightly, the rest of CdiA is secreted and the FHA-2 domain becomes stably associated with the target cell's outer membrane where it facilitates entry of the toxic CT domain into the target cell periplasm. From there the toxic CT domain is cleaved and gains access to the target cell cytoplasm via an inner membrane protein. In Dickeya dadantii (strain 3937) (Erwinia chrysanthemi (strain 3937)), this protein is Deoxyribonuclease CdiA.